The chain runs to 152 residues: Protein-export protein SecB (152 aa).

This sequence belongs to the SecB family. Homotetramer, a dimer of dimers. One homotetramer interacts with 1 SecA dimer.

The protein resides in the cytoplasm. Functionally, one of the proteins required for the normal export of preproteins out of the cell cytoplasm. It is a molecular chaperone that binds to a subset of precursor proteins, maintaining them in a translocation-competent state. It also specifically binds to its receptor SecA. This Rickettsia massiliae (strain Mtu5) protein is Protein-export protein SecB.